Here is a 319-residue protein sequence, read N- to C-terminus: tRNA uridine(34) hydroxylase (319 aa).

The Rhodanese domain maps to 127 to 221; that stretch reads KQEDTVIIDA…YGKDPEVQGE (95 aa). Cysteine 181 functions as the Cysteine persulfide intermediate in the catalytic mechanism.

This sequence belongs to the TrhO family.

The catalysed reaction is uridine(34) in tRNA + AH2 + O2 = 5-hydroxyuridine(34) in tRNA + A + H2O. Its function is as follows. Catalyzes oxygen-dependent 5-hydroxyuridine (ho5U) modification at position 34 in tRNAs. This is tRNA uridine(34) hydroxylase from Bacillus cereus (strain Q1).